The sequence spans 357 residues: Sorbitol dehydrogenase (357 aa).

Residue alanine 2 is modified to N-acetylalanine. A Zn(2+)-binding site is contributed by cysteine 45. Position 51 (tyrosine 51) interacts with substrate. Positions 70, 71, and 156 each coordinate Zn(2+). Glutamate 156 serves as a coordination point for substrate. Residue serine 169 is modified to Phosphoserine. Residues isoleucine 184, aspartate 204, arginine 209, 273–275 (VGM), and 297–299 (VFR) each bind NAD(+). Arginine 299 and tyrosine 300 together coordinate substrate.

It belongs to the zinc-containing alcohol dehydrogenase family. In terms of assembly, homotetramer; dimer of dimers. Zn(2+) serves as cofactor. In terms of tissue distribution, expressed in liver and testis.

It localises to the mitochondrion membrane. The protein resides in the cell projection. Its subcellular location is the cilium. It is found in the flagellum. The catalysed reaction is keto-D-fructose + NADH + H(+) = D-sorbitol + NAD(+). The enzyme catalyses xylitol + NAD(+) = D-xylulose + NADH + H(+). It catalyses the reaction L-iditol + NAD(+) = keto-L-sorbose + NADH + H(+). Polyol dehydrogenase that catalyzes the reversible NAD(+)-dependent oxidation of various sugar alcohols. Is active with D-sorbitol (D-glucitol) leading to the C2-oxidized product D-fructose. Is a key enzyme in the polyol pathway that interconverts glucose and fructose via sorbitol, which constitutes an important alternate route for glucose metabolism. May play a role in sperm motility by using sorbitol as an alternative energy source for sperm motility. The chain is Sorbitol dehydrogenase (Sord) from Rattus norvegicus (Rat).